The chain runs to 136 residues: Large ribosomal subunit protein uL13 (136 aa).

This sequence belongs to the universal ribosomal protein uL13 family. As to quaternary structure, part of the 50S ribosomal subunit.

Functionally, this protein is one of the early assembly proteins of the 50S ribosomal subunit, although it is not seen to bind rRNA by itself. It is important during the early stages of 50S assembly. The sequence is that of Large ribosomal subunit protein uL13 from Thermoplasma volcanium (strain ATCC 51530 / DSM 4299 / JCM 9571 / NBRC 15438 / GSS1).